We begin with the raw amino-acid sequence, 149 residues long: Large ribosomal subunit protein bL9 (149 aa).

This sequence belongs to the bacterial ribosomal protein bL9 family.

Functionally, binds to the 23S rRNA. The sequence is that of Large ribosomal subunit protein bL9 from Xylella fastidiosa (strain M23).